The primary structure comprises 396 residues: Elongation factor Tu (396 aa).

The 195-residue stretch at 11–205 (KPHVNIGTIG…TVDEYIPTPE (195 aa)) folds into the tr-type G domain. The G1 stretch occupies residues 20 to 27 (GHVDHGKT). Position 20 to 27 (20 to 27 (GHVDHGKT)) interacts with GTP. Mg(2+) is bound at residue threonine 27. Residues 61-65 (GITIN) form a G2 region. The interval 82–85 (DAPG) is G3. Residues 82 to 86 (DAPGH) and 137 to 140 (NKVD) contribute to the GTP site. The G4 stretch occupies residues 137-140 (NKVD). Positions 175 to 177 (SAL) are G5.

This sequence belongs to the TRAFAC class translation factor GTPase superfamily. Classic translation factor GTPase family. EF-Tu/EF-1A subfamily. Monomer.

The protein resides in the cytoplasm. The enzyme catalyses GTP + H2O = GDP + phosphate + H(+). GTP hydrolase that promotes the GTP-dependent binding of aminoacyl-tRNA to the A-site of ribosomes during protein biosynthesis. The chain is Elongation factor Tu from Lactobacillus johnsonii (strain CNCM I-12250 / La1 / NCC 533).